The following is a 411-amino-acid chain: Glutamate dehydrogenase A (411 aa).

Residue Lys-102 is part of the active site.

Belongs to the Glu/Leu/Phe/Val dehydrogenases family.

The catalysed reaction is L-glutamate + NAD(+) + H2O = 2-oxoglutarate + NH4(+) + NADH + H(+). It carries out the reaction L-glutamate + NADP(+) + H2O = 2-oxoglutarate + NH4(+) + NADPH + H(+). This is Glutamate dehydrogenase A (GDHA) from Nicotiana plumbaginifolia (Leadwort-leaved tobacco).